The sequence spans 433 residues: Trigger factor (433 aa).

The 86-residue stretch at 161 to 246 (GKRVSIDFVG…VNKVEARELP (86 aa)) folds into the PPIase FKBP-type domain.

It belongs to the FKBP-type PPIase family. Tig subfamily.

The protein resides in the cytoplasm. The enzyme catalyses [protein]-peptidylproline (omega=180) = [protein]-peptidylproline (omega=0). Functionally, involved in protein export. Acts as a chaperone by maintaining the newly synthesized protein in an open conformation. Functions as a peptidyl-prolyl cis-trans isomerase. In Vibrio cholerae serotype O1 (strain ATCC 39541 / Classical Ogawa 395 / O395), this protein is Trigger factor.